The following is a 146-amino-acid chain: Endoribonuclease YbeY (146 aa).

Zn(2+)-binding residues include histidine 108, histidine 112, and histidine 118.

This sequence belongs to the endoribonuclease YbeY family. Zn(2+) serves as cofactor.

The protein localises to the cytoplasm. Single strand-specific metallo-endoribonuclease involved in late-stage 70S ribosome quality control and in maturation of the 3' terminus of the 16S rRNA. The polypeptide is Endoribonuclease YbeY (Onion yellows phytoplasma (strain OY-M)).